We begin with the raw amino-acid sequence, 113 residues long: MAALGSPARTLRGLLRELRYLNAATGRPYRDTAAYRYLVKAFRAHRVTSEKLCRAQHELHFQAATYLCLLRSIRQHVALHQEFHGKGERSVEESAGLVGLQLPHQPGGKGWEP.

The tract at residues 94–113 is disordered; that stretch reads SAGLVGLQLPHQPGGKGWEP.

Belongs to the FMC1 family. Interacts with ATPAF2.

It is found in the mitochondrion. Its function is as follows. Plays a role in the assembly/stability of the mitochondrial membrane ATP synthase (F(1)F(0) ATP synthase or Complex V). This chain is Protein FMC1 homolog, found in Rattus norvegicus (Rat).